The primary structure comprises 131 residues: Global transcriptional regulator Spx 1 (131 aa).

Cysteine 10 and cysteine 13 are disulfide-bonded.

The protein belongs to the ArsC family. Spx subfamily. In terms of assembly, interacts with the C-terminal domain of the alpha subunit of the RNAP.

The protein resides in the cytoplasm. Its function is as follows. Global transcriptional regulator that plays a key role in stress response and exerts either positive or negative regulation of genes. Acts by interacting with the C-terminal domain of the alpha subunit of the RNA polymerase (RNAP). This interaction can enhance binding of RNAP to the promoter region of target genes and stimulate their transcription, or block interaction of RNAP with activator. The sequence is that of Global transcriptional regulator Spx 1 from Oceanobacillus iheyensis (strain DSM 14371 / CIP 107618 / JCM 11309 / KCTC 3954 / HTE831).